Here is a 201-residue protein sequence, read N- to C-terminus: UPF0098 protein MT1961 (201 aa).

The segment at 125-146 is disordered; that stretch reads TADGETPGGGISLPNSSGQPAY.

This sequence belongs to the UPF0098 family.

The polypeptide is UPF0098 protein MT1961 (Mycobacterium tuberculosis (strain CDC 1551 / Oshkosh)).